The following is a 352-amino-acid chain: MITLNTEKSFVELKHITKRFGNNTVIDDLNLAIPQGKMVTLLGPSGCGKTTVLRAVAGLEKPTEGQIFIDGEDVTERSIQQRDICMVFQSYALFPHMSLGENIGYGLKMLGRPKAEINQRVKEALALVDLEGFEDRYVDQISGGQQQRVALARALILKPKVLLFDEPLSNLDANLRRSMREKIRELQQQFNITSLYVTHDQSEAFAVSDMVLVMNKGKIMQLGAPQELYRQPASRFMASFMGDANIFPATFTADSVNIYGYLIPRPQGFAAGLSESTVGIRPEAITLSHQGEESQRCTITQVAYMGPQYEVQVDWHGQSMLLQVNATQLQPNPGDSYYLQIHPYGMFVLSEQ.

Residues 11-241 form the ABC transporter domain; the sequence is VELKHITKRF…PASRFMASFM (231 aa). 43–50 provides a ligand contact to ATP; sequence GPSGCGKT.

It belongs to the ABC transporter superfamily. Fe(3+) ion importer (TC 3.A.1.10) family. The complex is composed of two ATP-binding proteins (FbpC), two transmembrane proteins (FbpB) and a solute-binding protein (FbpA).

Its subcellular location is the cell inner membrane. It catalyses the reaction Fe(3+)(out) + ATP + H2O = Fe(3+)(in) + ADP + phosphate + H(+). Its function is as follows. Part of the ABC transporter complex FbpABC involved in Fe(3+) ions import. Responsible for energy coupling to the transport system. This is Fe(3+) ions import ATP-binding protein FbpC 1 from Pectobacterium atrosepticum (strain SCRI 1043 / ATCC BAA-672) (Erwinia carotovora subsp. atroseptica).